Consider the following 316-residue polypeptide: Ribosomal RNA small subunit methyltransferase H (316 aa).

Residues Gly-35–His-37, Asp-55, Phe-79, Asp-101, and Gln-108 contribute to the S-adenosyl-L-methionine site. Positions Ala-291 to Leu-316 are disordered.

This sequence belongs to the methyltransferase superfamily. RsmH family.

The protein localises to the cytoplasm. The enzyme catalyses cytidine(1402) in 16S rRNA + S-adenosyl-L-methionine = N(4)-methylcytidine(1402) in 16S rRNA + S-adenosyl-L-homocysteine + H(+). Specifically methylates the N4 position of cytidine in position 1402 (C1402) of 16S rRNA. This chain is Ribosomal RNA small subunit methyltransferase H, found in Vibrio cholerae serotype O1 (strain ATCC 39315 / El Tor Inaba N16961).